The chain runs to 103 residues: Large ribosomal subunit protein bL21 (103 aa).

This sequence belongs to the bacterial ribosomal protein bL21 family. Part of the 50S ribosomal subunit. Contacts protein L20.

In terms of biological role, this protein binds to 23S rRNA in the presence of protein L20. This Acetivibrio thermocellus (strain ATCC 27405 / DSM 1237 / JCM 9322 / NBRC 103400 / NCIMB 10682 / NRRL B-4536 / VPI 7372) (Clostridium thermocellum) protein is Large ribosomal subunit protein bL21.